Consider the following 199-residue polypeptide: Holliday junction branch migration complex subunit RuvA (199 aa).

Residues 1–64 (MIAKLTGRLD…EDFLRLLGFA (64 aa)) are domain I. Positions 65 to 143 (RAEERDWFRL…ALGGISGSGP (79 aa)) are domain II. Residues 144–146 (ALS) are flexible linker. The segment at 147-199 (AAAGPVGDAIAALTGLGFKPGEASAAVAAANEELGADASLDALVRVALKKAAK) is domain III.

Belongs to the RuvA family. In terms of assembly, homotetramer. Forms an RuvA(8)-RuvB(12)-Holliday junction (HJ) complex. HJ DNA is sandwiched between 2 RuvA tetramers; dsDNA enters through RuvA and exits via RuvB. An RuvB hexamer assembles on each DNA strand where it exits the tetramer. Each RuvB hexamer is contacted by two RuvA subunits (via domain III) on 2 adjacent RuvB subunits; this complex drives branch migration. In the full resolvosome a probable DNA-RuvA(4)-RuvB(12)-RuvC(2) complex forms which resolves the HJ.

It is found in the cytoplasm. The RuvA-RuvB-RuvC complex processes Holliday junction (HJ) DNA during genetic recombination and DNA repair, while the RuvA-RuvB complex plays an important role in the rescue of blocked DNA replication forks via replication fork reversal (RFR). RuvA specifically binds to HJ cruciform DNA, conferring on it an open structure. The RuvB hexamer acts as an ATP-dependent pump, pulling dsDNA into and through the RuvAB complex. HJ branch migration allows RuvC to scan DNA until it finds its consensus sequence, where it cleaves and resolves the cruciform DNA. The chain is Holliday junction branch migration complex subunit RuvA from Sphingopyxis alaskensis (strain DSM 13593 / LMG 18877 / RB2256) (Sphingomonas alaskensis).